Here is a 506-residue protein sequence, read N- to C-terminus: Histidine ammonia-lyase (506 aa).

The segment at residues 143–145 (ASG) is a cross-link (5-imidazolinone (Ala-Gly)). A 2,3-didehydroalanine (Ser) modification is found at Ser144.

The protein belongs to the PAL/histidase family. In terms of processing, contains an active site 4-methylidene-imidazol-5-one (MIO), which is formed autocatalytically by cyclization and dehydration of residues Ala-Ser-Gly.

The protein localises to the cytoplasm. It catalyses the reaction L-histidine = trans-urocanate + NH4(+). It participates in amino-acid degradation; L-histidine degradation into L-glutamate; N-formimidoyl-L-glutamate from L-histidine: step 1/3. In Salmonella paratyphi C (strain RKS4594), this protein is Histidine ammonia-lyase.